A 245-amino-acid polypeptide reads, in one-letter code: MTAPRTLVLIPARMAATRLPGKPLLDIGGVPMVVHVLRRALAANIGRVAVATDTPAIADAVRAHGGEVVMTRADHPSGSDRIHEALQTLDPQRTIETVINLQGDFPTIRPEQIGAVLAPLDDPAVDIATLAAEIHTEEESTNPNVVKVVGSHIGTTRLRALYFTRATAPWGDGPRYHHIGLYAYRRAALERFVALPPSPLEQREKLEQLRALEAGMRIDVGIVDSVPRGVDTPADLETARRVLAG.

This sequence belongs to the KdsB family.

It localises to the cytoplasm. It carries out the reaction 3-deoxy-alpha-D-manno-oct-2-ulosonate + CTP = CMP-3-deoxy-beta-D-manno-octulosonate + diphosphate. It participates in nucleotide-sugar biosynthesis; CMP-3-deoxy-D-manno-octulosonate biosynthesis; CMP-3-deoxy-D-manno-octulosonate from 3-deoxy-D-manno-octulosonate and CTP: step 1/1. The protein operates within bacterial outer membrane biogenesis; lipopolysaccharide biosynthesis. In terms of biological role, activates KDO (a required 8-carbon sugar) for incorporation into bacterial lipopolysaccharide in Gram-negative bacteria. This chain is 3-deoxy-manno-octulosonate cytidylyltransferase, found in Rhodopseudomonas palustris (strain HaA2).